Consider the following 610-residue polypeptide: Probable pleckstrin homology domain-containing family N member 1 (610 aa).

A disordered region spans residues 1–30; the sequence is MGNSHCVPQAPRRLRASFSRKPSLKGNRED. The N-myristoyl glycine moiety is linked to residue Gly-2. The segment at 61 to 100 is interaction with C1QBP; it reads TDIPGPEHHPENLEQPFLSVFKKGWRRTPVRNLGKVVHYS. 2 PH domains span residues 96-192 and 227-324; these read VVHY…MALL and AICA…SRRD. The residue at position 307 (Tyr-307) is a Phosphotyrosine. Disordered stretches follow at residues 327–357, 371–431, 443–473, and 493–610; these read HLPP…SNGR, QSLP…PLPL, LDSG…ATSR, and PGPD…IQWI. Composition is skewed to polar residues over residues 371 to 380 and 391 to 402; these read QSLPESSVPT and NQTDSNCVSTGQ. Tyr-462 carries the post-translational modification Phosphotyrosine. Residues 504 to 526 show a composition bias toward low complexity; the sequence is VSVSVPVSESSSGISSSPGPLGS.

Found in a complex with cytochrome c mRNA and various ribosomal proteins. Interacts with C1QBP, ELAVL1 and BID. Post-translationally, phosphorylation is essential for its mitochondrial localization and regulates its interaction with C1QBP. In terms of tissue distribution, testis and adipose tissue (at protein level). Ubiquitous.

The protein resides in the cell membrane. Its subcellular location is the mitochondrion membrane. It is found in the mitochondrion. Controls the stability of the leptin mRNA harboring an AU-rich element (ARE) in its 3' UTR, in cooperation with the RNA stabilizer ELAVL1. Decreases the stability of the leptin mRNA by antagonizing the function of ELAVL1 by inducing its atypical recruitment from the nucleus to the cytosol. Binds to cardiolipin (CL), phosphatidic acid (PA), phosphatidylinositol 4-phosphate (PtdIns(4)P) and phosphatidylserine (PS). In Mus musculus (Mouse), this protein is Probable pleckstrin homology domain-containing family N member 1 (Plekhn1).